A 469-amino-acid chain; its full sequence is UDP-N-acetylmuramate--L-alanine ligase (469 aa).

Position 113–119 (113–119) interacts with ATP; sequence GTHGKTT.

Belongs to the MurCDEF family.

It localises to the cytoplasm. The catalysed reaction is UDP-N-acetyl-alpha-D-muramate + L-alanine + ATP = UDP-N-acetyl-alpha-D-muramoyl-L-alanine + ADP + phosphate + H(+). It participates in cell wall biogenesis; peptidoglycan biosynthesis. In terms of biological role, cell wall formation. This Neisseria meningitidis serogroup B (strain ATCC BAA-335 / MC58) protein is UDP-N-acetylmuramate--L-alanine ligase.